Reading from the N-terminus, the 352-residue chain is Phosphoribosylformylglycinamidine cyclo-ligase (352 aa).

This sequence belongs to the AIR synthase family.

It localises to the cytoplasm. The enzyme catalyses 2-formamido-N(1)-(5-O-phospho-beta-D-ribosyl)acetamidine + ATP = 5-amino-1-(5-phospho-beta-D-ribosyl)imidazole + ADP + phosphate + H(+). It participates in purine metabolism; IMP biosynthesis via de novo pathway; 5-amino-1-(5-phospho-D-ribosyl)imidazole from N(2)-formyl-N(1)-(5-phospho-D-ribosyl)glycinamide: step 2/2. In Pseudomonas putida (strain GB-1), this protein is Phosphoribosylformylglycinamidine cyclo-ligase.